We begin with the raw amino-acid sequence, 223 residues long: 7-cyano-7-deazaguanine synthase (223 aa).

Residue 12 to 22 (FSGGQDSTTCL) coordinates ATP. Residues Cys189, Cys198, Cys201, and Cys204 each contribute to the Zn(2+) site.

The protein belongs to the QueC family. In terms of assembly, homodimer. Zn(2+) is required as a cofactor.

The enzyme catalyses 7-carboxy-7-deazaguanine + NH4(+) + ATP = 7-cyano-7-deazaguanine + ADP + phosphate + H2O + H(+). It functions in the pathway purine metabolism; 7-cyano-7-deazaguanine biosynthesis. Catalyzes the ATP-dependent conversion of 7-carboxy-7-deazaguanine (CDG) to 7-cyano-7-deazaguanine (preQ(0)). The chain is 7-cyano-7-deazaguanine synthase from Halalkalibacterium halodurans (strain ATCC BAA-125 / DSM 18197 / FERM 7344 / JCM 9153 / C-125) (Bacillus halodurans).